The sequence spans 332 residues: MRATVLGAGSWGTALASLLAGKGYTVTSWDKDAAVLDDIARNHRNERYLPGLQLPPTLHASGEVAKALEGAELVVLAVPSHAVRPVVIEAKRHVHAGTPIVCVAKGIELDTLMTMTEVVEDVLPVPLHPYLAVLSGPSFAKEVAKGLPTAVTVAARWERIAKQVQDAFHTKTFRPYTSGDVVGCEVGGCVKNVVAIAAGISDGMGFGANAMAALVTRGLAEITRLAVRKGANPLTLSGLAGLGDLVLTCSSDLSRNRTVGRGLAAGKTADAIQRELGQVAEGVRNARSARELAKRLGVDMPITEAIYRVLYEGLAPREAVTALMMRETKPEL.

NADPH-binding residues include serine 10, tryptophan 11, lysine 31, and lysine 105. Lysine 105, glycine 136, and serine 138 together coordinate sn-glycerol 3-phosphate. Alanine 140 is an NADPH binding site. Residues lysine 191, aspartate 244, serine 254, arginine 255, and asparagine 256 each coordinate sn-glycerol 3-phosphate. Residue lysine 191 is the Proton acceptor of the active site. An NADPH-binding site is contributed by arginine 255. Residues valine 279 and glutamate 281 each coordinate NADPH.

The protein belongs to the NAD-dependent glycerol-3-phosphate dehydrogenase family.

It localises to the cytoplasm. The catalysed reaction is sn-glycerol 3-phosphate + NAD(+) = dihydroxyacetone phosphate + NADH + H(+). It carries out the reaction sn-glycerol 3-phosphate + NADP(+) = dihydroxyacetone phosphate + NADPH + H(+). It functions in the pathway membrane lipid metabolism; glycerophospholipid metabolism. Catalyzes the reduction of the glycolytic intermediate dihydroxyacetone phosphate (DHAP) to sn-glycerol 3-phosphate (G3P), the key precursor for phospholipid synthesis. This is Glycerol-3-phosphate dehydrogenase [NAD(P)+] from Anaeromyxobacter sp. (strain K).